Here is a 198-residue protein sequence, read N- to C-terminus: Nascent polypeptide-associated complex subunit alpha (198 aa).

Positions 48-113 (ITRVVLKRTR…QAAAETGSVS (66 aa)) constitute an NAC-A/B domain. The 40-residue stretch at 159–198 (LEDSDIKLVMEQANVSRNKAINGLKKNDSDVVNTIMDLCK) folds into the UBA domain.

This sequence belongs to the NAC-alpha family. In terms of assembly, part of the nascent polypeptide-associated complex (NAC), consisting of EGD2 and EGD1. NAC associates with ribosomes via EGD1.

It is found in the cytoplasm. The protein resides in the nucleus. In terms of biological role, component of the nascent polypeptide-associated complex (NAC), a dynamic component of the ribosomal exit tunnel, protecting the emerging polypeptides from interaction with other cytoplasmic proteins to ensure appropriate nascent protein targeting. The NAC complex also promotes mitochondrial protein import by enhancing productive ribosome interactions with the outer mitochondrial membrane and blocks the inappropriate interaction of ribosomes translating non-secretory nascent polypeptides with translocation sites in the membrane of the endoplasmic reticulum. EGD2 may also be involved in transcription regulation. The chain is Nascent polypeptide-associated complex subunit alpha (EGD2) from Yarrowia lipolytica (strain CLIB 122 / E 150) (Yeast).